We begin with the raw amino-acid sequence, 345 residues long: uncharacterized protein (345 aa).

Its subcellular location is the plastid. It localises to the chloroplast. This is an uncharacterized protein from Chlamydomonas moewusii (Chlamydomonas eugametos).